A 90-amino-acid chain; its full sequence is Probable Fe(2+)-trafficking protein (90 aa).

This sequence belongs to the Fe(2+)-trafficking protein family.

Functionally, could be a mediator in iron transactions between iron acquisition and iron-requiring processes, such as synthesis and/or repair of Fe-S clusters in biosynthetic enzymes. The protein is Probable Fe(2+)-trafficking protein of Nitrosospira multiformis (strain ATCC 25196 / NCIMB 11849 / C 71).